A 221-amino-acid polypeptide reads, in one-letter code: uncharacterized protein (221 aa).

Helical transmembrane passes span 41 to 63, 78 to 100, 141 to 163, and 178 to 200; these read TGNI…HSLI, AVMY…SSLS, ILAY…ISFL, and LILR…VNLF.

The protein localises to the cell membrane. This is an uncharacterized protein from Archaeoglobus fulgidus (strain ATCC 49558 / DSM 4304 / JCM 9628 / NBRC 100126 / VC-16).